Reading from the N-terminus, the 23-residue chain is Cardioactive peptide CAP23 (23 aa).

The cysteines at positions 7 and 19 are disulfide-linked.

It belongs to the GBP/PSP1/paralytic peptide family.

Has excitatory effects on a semi-isolated heart from larval Manduca sexta, causing an inotropic effect at low concentrations of peptide and chronotropic and inotropic effects at high doses. The sequence is that of Cardioactive peptide CAP23 from Spodoptera eridania (Southern armyworm).